We begin with the raw amino-acid sequence, 57 residues long: Small ribosomal subunit protein eS27 (57 aa).

Zn(2+)-binding residues include Cys10, Cys13, Cys29, and Cys32. The segment at 10–32 (CPDCENEQSLFEKAASEVSCAVC) adopts a C4-type zinc-finger fold.

It belongs to the eukaryotic ribosomal protein eS27 family. As to quaternary structure, part of the 30S ribosomal subunit. Zn(2+) serves as cofactor.

The sequence is that of Small ribosomal subunit protein eS27 from Haloarcula marismortui (strain ATCC 43049 / DSM 3752 / JCM 8966 / VKM B-1809) (Halobacterium marismortui).